The chain runs to 162 residues: Small ribosomal subunit protein uS7m (162 aa).

It belongs to the universal ribosomal protein uS7 family. In terms of assembly, part of the small ribosomal subunit.

It localises to the mitochondrion. In terms of biological role, one of the primary rRNA binding proteins, it binds directly to 16S-like rRNA where it nucleates assembly of the head domain of the small subunit. This Dictyostelium discoideum (Social amoeba) protein is Small ribosomal subunit protein uS7m (mrps7).